Reading from the N-terminus, the 256-residue chain is MFKKLINKKNTINNYNEELDSSNIPEHIAIIMDGNGRWAKKRKMPRIKGHYEGMQTIKKITRIASDIGVKYLTLYAFSTENWSRPESEVNYIMNLPVNFLKTFLPELIEKNVKVETIGFTDKLPKSTIEAINNAKEKTANNTGLKLIFAINYGGRAELVHSIKNMFDELHQQGLNSDIIDETYINNHLMTKDYPDPELLIRTSGEQRISNFLIWQVSYSEFIFNQKLWPDFDEDELIKCIKIYQSRQRRFGGLSEE.

Asp-33 is a catalytic residue. Mg(2+) is bound at residue Asp-33. Residues 34-37 (GNGR), Trp-38, Arg-46, His-50, and 78-80 (STE) contribute to the substrate site. Asn-81 acts as the Proton acceptor in catalysis. Residues Trp-82, Arg-84, Arg-201, and 207 to 209 (RIS) each bind substrate. Glu-220 is a binding site for Mg(2+).

This sequence belongs to the UPP synthase family. As to quaternary structure, homodimer. Mg(2+) serves as cofactor.

Functionally, catalyzes the condensation of isopentenyl diphosphate (IPP) with allylic pyrophosphates generating different type of terpenoids. This chain is Isoprenyl transferase, found in Staphylococcus aureus (strain Mu50 / ATCC 700699).